Reading from the N-terminus, the 809-residue chain is TPR repeat-containing protein TP_0920 (809 aa).

Positions 103 to 125 (PGEARALPNSEQPEVPASLDSTS) are disordered. TPR repeat units follow at residues 315 to 348 (LREY…DPHC), 383 to 416 (AFLS…DPHQ), 418 to 450 (LFAL…FLAQ), 471 to 504 (TEVR…GSAD), 513 to 550 (LLLR…APDC), 552 to 582 (LYHF…DPDN), 583 to 616 (GWLH…LPHE), 656 to 689 (GQAF…EPQN), and 723 to 756 (AHVY…WPQC).

The polypeptide is TPR repeat-containing protein TP_0920 (Treponema pallidum (strain Nichols)).